We begin with the raw amino-acid sequence, 1376 residues long: Protein FAM135B (1376 aa).

A compositionally biased stretch (acidic residues) spans asparagine 431 to proline 442. The interval asparagine 431 to aspartate 489 is disordered. Over residues serine 443–glutamate 462 the composition is skewed to polar residues.

It belongs to the FAM135 family.

The protein is Protein FAM135B (fam135b) of Xenopus laevis (African clawed frog).